Reading from the N-terminus, the 88-residue chain is Small ribosomal subunit protein uS15c (88 aa).

Belongs to the universal ribosomal protein uS15 family. Part of the 30S ribosomal subunit.

The protein resides in the plastid. Its subcellular location is the chloroplast. This chain is Small ribosomal subunit protein uS15c (rps15), found in Draba nemorosa (Woodland whitlowgrass).